Reading from the N-terminus, the 420-residue chain is Mannose-1-phosphate guanylyltransferase regulatory subunit alpha (420 aa).

Positions 2–251 are substrate-binding domain; that stretch reads LKAVILIGGP…DGIWSQIKSA (250 aa). Residues glutamate 85 and glutamine 247 each contribute to the GDP-alpha-D-mannose site. The interval 273–420 is hexapeptide repeat domain; that stretch reads LARHTAGGPR…SRSFTNQIIL (148 aa). Positions 356–384 are C-loop; sequence TPNDPNPNDPRARMDSESLFKDGKLLPAI.

The protein belongs to the transferase hexapeptide repeat family. In terms of assembly, component of the GMPPA-GMPPB mannose-1-phosphate guanylyltransferase complex composed of 4 GMPPA subunits and 8 GMPPB subunits; the complex is organized into three layers, a central layer made up of 2 GMPPA dimers sandwiched between two layers each made up of 2 GMPPB dimers.

The protein resides in the cytoplasm. Functionally, regulatory subunit of the GMPPA-GMPPB mannose-1-phosphate guanylyltransferase complex; reduces the catalytic activity of GMPPB when part of the complex. Mediates allosteric feedback inhibition of GMPPB catalytic activity upon binding GDP-alpha-D-mannose. Together with GMPPB regulates GDP-alpha-D-mannose levels. The protein is Mannose-1-phosphate guanylyltransferase regulatory subunit alpha (Gmppa) of Rattus norvegicus (Rat).